The primary structure comprises 314 residues: Malate dehydrogenase (314 aa).

Residues G12–G17 and D36 each bind NAD(+). Substrate contacts are provided by R85 and R91. Residues N98 and V121 to N123 each bind NAD(+). 2 residues coordinate substrate: N123 and R154. Catalysis depends on H178, which acts as the Proton acceptor.

It belongs to the LDH/MDH superfamily. MDH type 3 family.

It carries out the reaction (S)-malate + NAD(+) = oxaloacetate + NADH + H(+). Its function is as follows. Catalyzes the reversible oxidation of malate to oxaloacetate. This chain is Malate dehydrogenase, found in Wolbachia pipientis subsp. Culex pipiens (strain wPip).